The following is a 93-amino-acid chain: Large ribosomal subunit protein uL23 (93 aa).

The protein belongs to the universal ribosomal protein uL23 family. Part of the 50S ribosomal subunit. Contacts protein L29, and trigger factor when it is bound to the ribosome.

Its function is as follows. One of the early assembly proteins it binds 23S rRNA. One of the proteins that surrounds the polypeptide exit tunnel on the outside of the ribosome. Forms the main docking site for trigger factor binding to the ribosome. This Helicobacter pylori (strain P12) protein is Large ribosomal subunit protein uL23.